Consider the following 149-residue polypeptide: Large ribosomal subunit protein bL9 (149 aa).

Belongs to the bacterial ribosomal protein bL9 family.

Functionally, binds to the 23S rRNA. In Bacillus licheniformis (strain ATCC 14580 / DSM 13 / JCM 2505 / CCUG 7422 / NBRC 12200 / NCIMB 9375 / NCTC 10341 / NRRL NRS-1264 / Gibson 46), this protein is Large ribosomal subunit protein bL9.